Here is a 78-residue protein sequence, read N- to C-terminus: Ferredoxin 7Fe (78 aa).

2 consecutive 4Fe-4S ferredoxin-type domains span residues 2–29 (AYVI…IHEG) and 31–60 (DQYY…HEDF). Residues cysteine 9 and cysteine 17 each contribute to the [3Fe-4S] cluster site. [4Fe-4S] cluster is bound by residues cysteine 21, cysteine 40, cysteine 43, and cysteine 46. Cysteine 50 lines the [3Fe-4S] cluster pocket.

As to quaternary structure, monomer. [4Fe-4S] cluster is required as a cofactor. [3Fe-4S] cluster serves as cofactor.

The chain is Ferredoxin 7Fe (fdxA) from Hydrogenibacillus schlegelii (Bacillus schlegelii).